Reading from the N-terminus, the 82-residue chain is Small ribosomal subunit protein bS16 (82 aa).

It belongs to the bacterial ribosomal protein bS16 family.

This chain is Small ribosomal subunit protein bS16, found in Francisella tularensis subsp. holarctica (strain FTNF002-00 / FTA).